A 169-amino-acid chain; its full sequence is General odorant-binding protein 57a (169 aa).

Positions 1-20 (MFNTRLAIFLLLIVVSLSQA) are cleaved as a signal peptide. Disulfide bonds link Cys39–Cys77, Cys73–Cys120, and Cys111–Cys129.

The protein belongs to the PBP/GOBP family.

In terms of biological role, present in the aqueous fluid surrounding olfactory sensory dendrites and are thought to aid in the capture and transport of hydrophobic odorants into and through this fluid. This Drosophila melanogaster (Fruit fly) protein is General odorant-binding protein 57a.